The sequence spans 212 residues: Large ribosomal subunit protein uL3 (212 aa).

Residues 133–152 form a disordered region; that stretch reads RGSMGHGSKYHRRPGSLGAK.

This sequence belongs to the universal ribosomal protein uL3 family. In terms of assembly, part of the 50S ribosomal subunit. Forms a cluster with proteins L14 and L19.

Its function is as follows. One of the primary rRNA binding proteins, it binds directly near the 3'-end of the 23S rRNA, where it nucleates assembly of the 50S subunit. This chain is Large ribosomal subunit protein uL3, found in Syntrophomonas wolfei subsp. wolfei (strain DSM 2245B / Goettingen).